Reading from the N-terminus, the 568-residue chain is Envelope glycoprotein E (568 aa).

An N-terminal signal peptide occupies residues 1–20 (MMPATLAGLALAVTVATMFA). Residues 21–422 (QRVDSTTIHH…GGGPGNSKRR (402 aa)) lie on the Virion surface side of the membrane. N-linked (GlcNAc...) asparagine; by host glycans are attached at residues Asn88, Asn179, and Asn248. An intrachain disulfide couples Cys271 to Cys280. The chain crosses the membrane as a helical span at residues 423 to 443 (AAVLGAAVWIALTLLILGGLG). The Intravirion portion of the chain corresponds to 444-568 (AYVAVNKKCL…ANKTFPSQRY (125 aa)). Residues 465–468 (KPTL) carry the Internalization motif motif. The interval 470 to 534 (THAHTYTSLP…SRRNSFGPTL (65 aa)) is disordered. Residues 482-497 (GDLSLEQDAEDEDEDE) form an acidic region. Acidic residues predominate over residues 486-500 (LEQDAEDEDEDEEEL). Over residues 515–526 (KSSRSPSRRSSR) the composition is skewed to basic residues.

Belongs to the alphaherpesvirinae glycoprotein E family. Interacts with gI. Post-translationally, phosphorylated on serines within the acidic cluster. Phosphorylation determines whether endocytosed viral gE traffics to the trans-Golgi network or recycles to the cell membrane.

It localises to the virion membrane. It is found in the host cell membrane. The protein resides in the host cell junction. Its subcellular location is the host Golgi apparatus membrane. The protein localises to the host endosome membrane. In terms of biological role, in epithelial cells, the heterodimer gE/gI is required for the cell-to-cell spread of the virus, by sorting nascent virions to cell junctions. Once the virus reaches the cell junctions, virus particles can spread to adjacent cells extremely rapidly through interactions with cellular receptors that accumulate at these junctions. Implicated in basolateral spread in polarized cells. In neuronal cells, gE/gI is essential for the anterograde spread of the infection throughout the host nervous system. Together with US9, the heterodimer gE/gI is involved in the sorting and transport of viral structural components toward axon tips. The sequence is that of Envelope glycoprotein E (US8) from Psittacid herpesvirus 1 (isolate Amazon parrot/-/97-0001/1997) (PsHV-1).